The primary structure comprises 439 residues: tRNA modification GTPase MnmE (439 aa).

3 residues coordinate (6S)-5-formyl-5,6,7,8-tetrahydrofolate: Arg-24, Glu-81, and Lys-121. In terms of domain architecture, TrmE-type G spans 218–363; sequence GFKVVIAGAP…LRRLIGDIVE (146 aa). A K(+)-binding site is contributed by Asn-228. GTP contacts are provided by residues 228–233, 247–253, and 272–275; these read NAGKSS, TEIAGTT, and DTAG. Position 232 (Ser-232) interacts with Mg(2+). The K(+) site is built by Thr-247, Ile-249, and Thr-252. Mg(2+) is bound at residue Thr-253. Lys-439 is a binding site for (6S)-5-formyl-5,6,7,8-tetrahydrofolate.

The protein belongs to the TRAFAC class TrmE-Era-EngA-EngB-Septin-like GTPase superfamily. TrmE GTPase family. In terms of assembly, homodimer. Heterotetramer of two MnmE and two MnmG subunits. It depends on K(+) as a cofactor.

The protein resides in the cytoplasm. Exhibits a very high intrinsic GTPase hydrolysis rate. Involved in the addition of a carboxymethylaminomethyl (cmnm) group at the wobble position (U34) of certain tRNAs, forming tRNA-cmnm(5)s(2)U34. In Rhizobium johnstonii (strain DSM 114642 / LMG 32736 / 3841) (Rhizobium leguminosarum bv. viciae), this protein is tRNA modification GTPase MnmE.